The following is a 248-amino-acid chain: mRNA-decapping protein OPG122 (248 aa).

The Nudix hydrolase domain maps to 45 to 227; sequence HKRVSVSAIL…IAKYALDTAK (183 aa). The short motif at 126-147 is the Nudix box element; it reads GIPKRGENVPECLSREIKEEVN. Position 132 (Glu-132) interacts with Mg(2+). Glu-141 functions as the Nucleophile in the catalytic mechanism. Glu-145 is a Mn(2+) binding site. Mg(2+) is bound at residue Asp-167.

Belongs to the Nudix hydrolase family. Mg(2+) serves as cofactor. Mn(2+) is required as a cofactor.

The protein localises to the host mitochondrion. Its function is as follows. Decapping enzyme that remove the protective 5'-cap from both host and viral mRNAs to commit transcripts for decay by the cellular exonuclease XRN1. Preferentially targets spliced mRNAs and since all viral genes are intronless, it preferentially targets host over viral transcripts. Acceleration of the turnover of cellular transcripts promotes the shutoff of host protein synthesis and therefore diminish the magnitude of antiviral response. The sequence is that of mRNA-decapping protein OPG122 (OPG122) from Bos taurus (Bovine).